We begin with the raw amino-acid sequence, 71 residues long: uncharacterized protein (71 aa).

This is an uncharacterized protein from Spiroplasma virus 4 (SpV4).